A 545-amino-acid polypeptide reads, in one-letter code: Chaperonin GroEL 2 (545 aa).

Residues 30 to 33 (TLGP), Lys-51, 87 to 91 (DGTTT), Gly-415, and Asp-496 contribute to the ATP site.

It belongs to the chaperonin (HSP60) family. In terms of assembly, forms a cylinder of 14 subunits composed of two heptameric rings stacked back-to-back. Interacts with the co-chaperonin GroES.

Its subcellular location is the cytoplasm. The enzyme catalyses ATP + H2O + a folded polypeptide = ADP + phosphate + an unfolded polypeptide.. In terms of biological role, together with its co-chaperonin GroES, plays an essential role in assisting protein folding. The GroEL-GroES system forms a nano-cage that allows encapsulation of the non-native substrate proteins and provides a physical environment optimized to promote and accelerate protein folding. The protein is Chaperonin GroEL 2 of Nitrobacter winogradskyi (strain ATCC 25391 / DSM 10237 / CIP 104748 / NCIMB 11846 / Nb-255).